Consider the following 598-residue polypeptide: Aspartate--tRNA(Asp/Asn) ligase (598 aa).

An L-aspartate-binding site is contributed by Glu-174. The aspartate stretch occupies residues 198 to 201 (QQLK). Arg-220 provides a ligand contact to L-aspartate. Residues 220–222 (RDE) and Gln-229 each bind ATP. An L-aspartate-binding site is contributed by His-458. Glu-492 is an ATP binding site. An L-aspartate-binding site is contributed by Arg-499. 544 to 547 (GIDR) contacts ATP.

Belongs to the class-II aminoacyl-tRNA synthetase family. Type 1 subfamily. As to quaternary structure, homodimer.

It is found in the cytoplasm. It carries out the reaction tRNA(Asx) + L-aspartate + ATP = L-aspartyl-tRNA(Asx) + AMP + diphosphate. In terms of biological role, aspartyl-tRNA synthetase with relaxed tRNA specificity since it is able to aspartylate not only its cognate tRNA(Asp) but also tRNA(Asn). Reaction proceeds in two steps: L-aspartate is first activated by ATP to form Asp-AMP and then transferred to the acceptor end of tRNA(Asp/Asn). The sequence is that of Aspartate--tRNA(Asp/Asn) ligase from Dehalococcoides mccartyi (strain ATCC BAA-2266 / KCTC 15142 / 195) (Dehalococcoides ethenogenes (strain 195)).